The chain runs to 238 residues: Ribonuclease PH (238 aa).

Phosphate-binding positions include arginine 86 and 124–126 (GTR).

It belongs to the RNase PH family. As to quaternary structure, homohexameric ring arranged as a trimer of dimers.

The enzyme catalyses tRNA(n+1) + phosphate = tRNA(n) + a ribonucleoside 5'-diphosphate. Phosphorolytic 3'-5' exoribonuclease that plays an important role in tRNA 3'-end maturation. Removes nucleotide residues following the 3'-CCA terminus of tRNAs; can also add nucleotides to the ends of RNA molecules by using nucleoside diphosphates as substrates, but this may not be physiologically important. Probably plays a role in initiation of 16S rRNA degradation (leading to ribosome degradation) during starvation. In Citrobacter koseri (strain ATCC BAA-895 / CDC 4225-83 / SGSC4696), this protein is Ribonuclease PH.